A 532-amino-acid polypeptide reads, in one-letter code: Bone morphogenetic protein receptor type-1A (532 aa).

The N-terminal stretch at 1 to 23 (MTQLYTYIRLLGACLFIISHVQG) is a signal peptide. Residues 24–152 (QNLDSMLHGT…IGPFFDGSVR (129 aa)) are Extracellular-facing. Intrachain disulfides connect C61/C82, C63/C67, and C76/C100. An N-linked (GlcNAc...) asparagine glycan is attached at N73. The segment at 107–109 (DFQ) is mediates specificity for BMP ligand. 2 cysteine pairs are disulfide-bonded: C110–C124 and C125–C130. Residues 153–176 (WLAVLISMAVCIVAMIVFSSCFCY) form a helical membrane-spanning segment. Topologically, residues 177-532 (KHYCKSISSR…KMVESQDVKI (356 aa)) are cytoplasmic. Residues 204–233 (ESLKDLIDQSQSSGSGSGLPLLVQRTIAKQ) form the GS domain. Residues 234 to 525 (IQMVRQVGKG…RIKKTLAKMV (292 aa)) form the Protein kinase domain. Residues 240-248 (VGKGRYGEV) and K261 each bind ATP. D362 serves as the catalytic Proton acceptor.

Belongs to the protein kinase superfamily. TKL Ser/Thr protein kinase family. TGFB receptor subfamily. Interacts with low affinity with GDF5; positively regulates chondrocyte differentiation. Interacts with BMP4. Interacts with SCUBE3. Interacts with TSC22D1/TSC-22. Interacts with BMP2; the interaction may induce HAMP expression. Interacts with BMP6. Interacts with heterodimers composed of BMP2 and BMP6 in vitro; the interaction may induce HAMP expression. It depends on Mg(2+) as a cofactor. Mn(2+) serves as cofactor. Post-translationally, glycosylated.

It localises to the cell membrane. It is found in the cell surface. It catalyses the reaction L-threonyl-[receptor-protein] + ATP = O-phospho-L-threonyl-[receptor-protein] + ADP + H(+). It carries out the reaction L-seryl-[receptor-protein] + ATP = O-phospho-L-seryl-[receptor-protein] + ADP + H(+). On ligand binding, forms a receptor complex consisting of two type II and two type I transmembrane serine/threonine kinases. Type II receptors phosphorylate and activate type I receptors which autophosphorylate, then bind and activate SMAD transcriptional regulators. Receptor for BMP2, BMP4, GDF5 and GDF6. Positively regulates chondrocyte differentiation through GDF5 interaction. Mediates induction of adipogenesis by GDF6. May promote the expression of HAMP, potentially via its interaction with BMP2. This Rattus norvegicus (Rat) protein is Bone morphogenetic protein receptor type-1A (Bmpr1a).